A 347-amino-acid chain; its full sequence is NADH-ubiquinone oxidoreductase chain 2 (347 aa).

Helical transmembrane passes span 3-23 (PPIL…VMLS), 25-45 (HWLL…PILM), 66-86 (ASML…QWVI), 111-131 (FHFW…MILL), 149-169 (INTN…GWGG), 178-198 (IMAY…TYNP), 201-221 (MVLN…LFML), 237-257 (FPLI…LPPL), 274-294 (NMII…YFYL), and 325-345 (LLPP…MLSV).

It belongs to the complex I subunit 2 family. Core subunit of respiratory chain NADH dehydrogenase (Complex I) which is composed of 45 different subunits. Interacts with TMEM242.

The protein localises to the mitochondrion inner membrane. It carries out the reaction a ubiquinone + NADH + 5 H(+)(in) = a ubiquinol + NAD(+) + 4 H(+)(out). Core subunit of the mitochondrial membrane respiratory chain NADH dehydrogenase (Complex I) which catalyzes electron transfer from NADH through the respiratory chain, using ubiquinone as an electron acceptor. Essential for the catalytic activity and assembly of complex I. The polypeptide is NADH-ubiquinone oxidoreductase chain 2 (Canis lupus familiaris (Dog)).